A 180-amino-acid polypeptide reads, in one-letter code: Nucleoside triphosphate/diphosphate phosphatase (180 aa).

The active-site Proton donor is the arginine 26. Residues asparagine 90, aspartate 106, aspartate 108, aspartate 110, aspartate 123, and glutamate 126 each contribute to the Mg(2+) site.

It belongs to the Ntdp family. Mg(2+) serves as cofactor.

It catalyses the reaction a ribonucleoside 5'-triphosphate + H2O = a ribonucleoside 5'-diphosphate + phosphate + H(+). It carries out the reaction a ribonucleoside 5'-diphosphate + H2O = a ribonucleoside 5'-phosphate + phosphate + H(+). Its function is as follows. Has nucleoside phosphatase activity towards nucleoside triphosphates and nucleoside diphosphates. The protein is Nucleoside triphosphate/diphosphate phosphatase of Staphylococcus epidermidis (strain ATCC 35984 / DSM 28319 / BCRC 17069 / CCUG 31568 / BM 3577 / RP62A).